A 211-amino-acid polypeptide reads, in one-letter code: BAG family molecular chaperone regulator 2 (211 aa).

N-acetylalanine is present on alanine 2. A phosphoserine mark is found at serine 20, serine 31, and serine 73. Positions 20–61 (SMADRSSRLLESLDQLELRVEALREAATAVEQEKEVLLEMIH) form a coiled coil. Positions 109–189 (SLKHATRIID…NIENADKAIK (81 aa)) constitute a BAG domain.

Binds to the ATPase domain of HSP/HSC70 chaperones. May interact with NWD1. Interacts with HSPA1A (via NBD), HSPA1B (via NBD) and HSPA8. May interact with DNJC9; the interaction seems to be histone-dependent.

Co-chaperone for HSP70 and HSC70 chaperone proteins. Acts as a nucleotide-exchange factor (NEF) promoting the release of ADP from the HSP70 and HSC70 proteins thereby triggering client/substrate protein release. This is BAG family molecular chaperone regulator 2 from Bos taurus (Bovine).